A 199-amino-acid chain; its full sequence is Recombination protein RecR (199 aa).

The C4-type zinc-finger motif lies at 57–72 (CSVCGNITEQDPCAIC). Residues 80 to 176 (STIMVVEEAK…KVTRLAAGLA (97 aa)) form the Toprim domain.

The protein belongs to the RecR family.

May play a role in DNA repair. It seems to be involved in an RecBC-independent recombinational process of DNA repair. It may act with RecF and RecO. This is Recombination protein RecR from Lactobacillus delbrueckii subsp. bulgaricus (strain ATCC BAA-365 / Lb-18).